A 306-amino-acid polypeptide reads, in one-letter code: Large ribosomal subunit protein mL45 (306 aa).

This sequence belongs to the mitochondrion-specific ribosomal protein mL45 family. As to quaternary structure, component of the mitochondrial ribosome large subunit (39S) which comprises a 16S rRNA and about 50 distinct proteins.

Its subcellular location is the mitochondrion. Functionally, component of the mitochondrial large ribosomal subunit (mt-LSU). Within the mitochondrial ribosomes, required to direct the nascent polypeptide toward the tunnel exit and position the exit at a distance from the membrane surface. The polypeptide is Large ribosomal subunit protein mL45 (MRPL45) (Bos taurus (Bovine)).